Reading from the N-terminus, the 326-residue chain is Target of rapamycin complex subunit LST8 (326 aa).

M1 bears the N-acetylmethionine mark. WD repeat units lie at residues 1–37 (MNTT…CTRT), 40–80 (HQDS…PIIS), 83–122 (GVSK…LQCQ), 126–165 (QVNA…NEQL), and 168–207 (EPES…GDDV). T51 is subject to Phosphothreonine. A Glycyl lysine isopeptide (Lys-Gly) (interchain with G-Cter in SUMO3) cross-link involves residue K86. Glycyl lysine isopeptide (Lys-Gly) (interchain with G-Cter in SUMO3) cross-links involve residues K215, K245, and K261. Residues 218–257 (AHTRYALQCRFSPDSTLLATCSADQTCKIWRTSNFSLMTE) form a WD 6 repeat. The stretch at 268–309 (SSRGWMWGCAFSGDSQYIVTASSDNLARLWCVETGEIKREYG) is one WD 7 repeat. K305 is covalently cross-linked (Glycyl lysine isopeptide (Lys-Gly) (interchain with G-Cter in SUMO3); alternate). Glycyl lysine isopeptide (Lys-Gly) (interchain with G-Cter in ubiquitin); alternate cross-links involve residues K305 and K313. K313 participates in a covalent cross-link: Glycyl lysine isopeptide (Lys-Gly) (interchain with G-Cter in SUMO1); alternate.

This sequence belongs to the WD repeat LST8 family. As to quaternary structure, part of the mechanistic target of rapamycin complex 1 (mTORC1) which contains MTOR, MLST8 and RPTOR. mTORC1 associates with AKT1S1/PRAS40, which inhibits its activity. mTORC1 binds to and is inhibited by FKBP12-rapamycin. Within mTORC1, interacts directly with MTOR and RPTOR. Component of the mechanistic target of rapamycin complex 2 (mTORC2), consisting in two heterotretramers composed of MTOR, MLST8, RICTOR and MAPKAP1/SIN1. Contrary to mTORC1, mTORC2 does not bind to and is not sensitive to FKBP12-rapamycin. mTORC1 and mTORC2 associate with DEPTOR, which regulates their activity. Interacts with RHEB. Interacts with MEAK7. Interacts with SIK3. Interacts with SLC38A7; this interaction promotes the recruitment of mTORC1 to the lysosome and its subsequent activation. In terms of processing, phosphorylation at Thr-51 by CDK1 promotes ubiquitination by the SCF(FBXW7) complex, followed by degradation. Post-translationally, ubiquitination by the SCF(FBXW7) and SCF(FBXW11) complexes following phosphorylation at Thr-51 by CDK1, leads to its degradation by the proteasome. Ubiquitination at Lys-305 and Lys-313 by TRAF2 via 'Lys-63'-linked polyubiquitin chains inhibits formation of the mTORC2 complex, while promoting formation of the mTORC1 complex: ubiquitination disrupts the interaction between MLST8 and MAPKAP1/SIN1 to favor mTORC1 assembly. Deubiquitination at Lys-305 and Lys-313 by OTUD7B promotes MLST8 interaction with MAPKAP1/SIN1, facilitating mTORC2 assembly. Sumoylation with SUMO1, SUMO2 and SUMO3 promotes assembly of both mTORC1 and mTORC2 complexes.

The protein localises to the lysosome membrane. It localises to the cytoplasm. Subunit of both mTORC1 and mTORC2, which regulates cell growth and survival in response to nutrient and hormonal signals. mTORC1 is activated in response to growth factors or amino acids. In response to nutrients, mTORC1 is recruited to the lysosome membrane and promotes protein, lipid and nucleotide synthesis by phosphorylating several substrates, such as ribosomal protein S6 kinase (RPS6KB1 and RPS6KB2) and EIF4EBP1 (4E-BP1). In the same time, it inhibits catabolic pathways by phosphorylating the autophagy initiation components ULK1 and ATG13, as well as transcription factor TFEB, a master regulators of lysosomal biogenesis and autophagy. The mTORC1 complex is inhibited in response to starvation and amino acid depletion. Within mTORC1, MLST8 interacts directly with MTOR and enhances its kinase activity. In nutrient-poor conditions, stabilizes the MTOR-RPTOR interaction and favors RPTOR-mediated inhibition of MTOR activity. As part of the mTORC2 complex, transduces signals from growth factors to pathways involved in proliferation, cytoskeletal organization, lipogenesis and anabolic output. mTORC2 is also activated by growth factors, but seems to be nutrient-insensitive. In response to growth factors, mTORC2 phosphorylates and activates AGC protein kinase family members, including AKT (AKT1, AKT2 and AKT3), PKC (PRKCA, PRKCB and PRKCE) and SGK1. mTORC2 functions upstream of Rho GTPases to regulate the actin cytoskeleton, probably by activating one or more Rho-type guanine nucleotide exchange factors. mTORC2 promotes the serum-induced formation of stress-fibers or F-actin. mTORC2 plays a critical role in AKT1 activation by mediating phosphorylation of different sites depending on the context, such as 'Thr-450', 'Ser-473', 'Ser-477' or 'Thr-479', facilitating the phosphorylation of the activation loop of AKT1 on 'Thr-308' by PDPK1/PDK1 which is a prerequisite for full activation. mTORC2 regulates the phosphorylation of SGK1 at 'Ser-422'. mTORC2 also modulates the phosphorylation of PRKCA on 'Ser-657'. Within mTORC2, MLST8 acts as a bridge between MAPKAP1/SIN1 and MTOR. In Mus musculus (Mouse), this protein is Target of rapamycin complex subunit LST8.